We begin with the raw amino-acid sequence, 183 residues long: UPF0200 protein Memar_1556 (183 aa).

8–15 (GMPASGKG) contacts ATP.

It belongs to the UPF0200 family.

The chain is UPF0200 protein Memar_1556 from Methanoculleus marisnigri (strain ATCC 35101 / DSM 1498 / JR1).